A 252-amino-acid chain; its full sequence is Thiazole synthase (252 aa).

Lysine 98 acts as the Schiff-base intermediate with DXP in catalysis. 1-deoxy-D-xylulose 5-phosphate-binding positions include glycine 159, 185–186 (AG), and 207–208 (AS).

It belongs to the ThiG family. In terms of assembly, homotetramer. Forms heterodimers with either ThiH or ThiS.

It localises to the cytoplasm. It catalyses the reaction [ThiS sulfur-carrier protein]-C-terminal-Gly-aminoethanethioate + 2-iminoacetate + 1-deoxy-D-xylulose 5-phosphate = [ThiS sulfur-carrier protein]-C-terminal Gly-Gly + 2-[(2R,5Z)-2-carboxy-4-methylthiazol-5(2H)-ylidene]ethyl phosphate + 2 H2O + H(+). It participates in cofactor biosynthesis; thiamine diphosphate biosynthesis. Catalyzes the rearrangement of 1-deoxy-D-xylulose 5-phosphate (DXP) to produce the thiazole phosphate moiety of thiamine. Sulfur is provided by the thiocarboxylate moiety of the carrier protein ThiS. In vitro, sulfur can be provided by H(2)S. The sequence is that of Thiazole synthase from Mycobacterium tuberculosis (strain ATCC 25177 / H37Ra).